The sequence spans 308 residues: MSAQKPGLHPRNRHHSRYDLATLCQVNPELRQFLTLTPAGEQSVDFANPLAVKALNKALLAHFYAVANWDIPDGFLCPPVPGRADYIHHLADLLAEATGSILANASILDIGVGANCIYPLIGVHEYGWRFTGSETSSQALSSAQAIISANPGLNRAIRLRRQKESGAIFNGIIHKNEQYDATLCNPPFHDSAAAARAGSERKRRNLGLNKDDALNFGGQQQELWCEGGEVAFIKKMIEESKGFAKQVMWFTSLVSRGENLPPLYRVLTEVGAVKVVKKEMAQGQKQSRFIAWTFMNDEQRRRFVNRQR.

It belongs to the methyltransferase superfamily. METTL16/RlmF family.

It is found in the cytoplasm. It carries out the reaction adenosine(1618) in 23S rRNA + S-adenosyl-L-methionine = N(6)-methyladenosine(1618) in 23S rRNA + S-adenosyl-L-homocysteine + H(+). Functionally, specifically methylates the adenine in position 1618 of 23S rRNA. The chain is Ribosomal RNA large subunit methyltransferase F from Escherichia coli (strain SMS-3-5 / SECEC).